A 133-amino-acid polypeptide reads, in one-letter code: MKDWLDEIHWNADGLVPAIAQDHRTGRILMMAWMNRESLALTVRENRAIYWSRSRGKLWRKGEESGHVQKVHELRLDCDADVIILQVEQLGGIACHTGRESCFYRVFEDGAWKVVDPILKDPDAIYRAGHPHE.

Residue D77 participates in Mg(2+) binding. C78 is a binding site for Zn(2+). The Mg(2+) site is built by D79 and D81. Zn(2+) contacts are provided by C95 and C102.

This sequence belongs to the PRA-CH family. Homodimer. Requires Mg(2+) as cofactor. Zn(2+) serves as cofactor.

It is found in the cytoplasm. It catalyses the reaction 1-(5-phospho-beta-D-ribosyl)-5'-AMP + H2O = 1-(5-phospho-beta-D-ribosyl)-5-[(5-phospho-beta-D-ribosylamino)methylideneamino]imidazole-4-carboxamide. The protein operates within amino-acid biosynthesis; L-histidine biosynthesis; L-histidine from 5-phospho-alpha-D-ribose 1-diphosphate: step 3/9. Its function is as follows. Catalyzes the hydrolysis of the adenine ring of phosphoribosyl-AMP. The chain is Phosphoribosyl-AMP cyclohydrolase from Azotobacter vinelandii (strain DJ / ATCC BAA-1303).